The following is a 102-amino-acid chain: Small ribosomal subunit protein uS10 (102 aa).

The protein belongs to the universal ribosomal protein uS10 family. In terms of assembly, part of the 30S ribosomal subunit.

Functionally, involved in the binding of tRNA to the ribosomes. The sequence is that of Small ribosomal subunit protein uS10 from Parafrankia sp. (strain EAN1pec).